Here is a 274-residue protein sequence, read N- to C-terminus: Large ribosomal subunit protein uL2cz/uL2cy (274 aa).

2 disordered regions span residues 1–21 (MAIHLYKTSTPGTRNGAVDSQ) and 224–274 (NPVD…RRSK).

It belongs to the universal ribosomal protein uL2 family. As to quaternary structure, part of the 50S ribosomal subunit.

The protein resides in the plastid. It is found in the chloroplast. The polypeptide is Large ribosomal subunit protein uL2cz/uL2cy (rpl2-A) (Gossypium hirsutum (Upland cotton)).